A 348-amino-acid polypeptide reads, in one-letter code: Heat-inducible transcription repressor HrcA (348 aa).

The protein belongs to the HrcA family.

In terms of biological role, negative regulator of class I heat shock genes (grpE-dnaK-dnaJ and groELS operons). Prevents heat-shock induction of these operons. The protein is Heat-inducible transcription repressor HrcA of Chlorobium chlorochromatii (strain CaD3).